The sequence spans 55 residues: Ferredoxin (55 aa).

2 4Fe-4S ferredoxin-type domains span residues 2 to 27 (YFIT…SPGD) and 28 to 55 (SVYV…PQQK). [4Fe-4S] cluster is bound by residues C8, C11, C14, C18, C37, C40, C43, and C47.

[4Fe-4S] cluster is required as a cofactor.

Functionally, ferredoxins are iron-sulfur proteins that transfer electrons in a wide variety of metabolic reactions. The chain is Ferredoxin from Acetivibrio thermocellus (Hungateiclostridium thermocellum).